Reading from the N-terminus, the 1036-residue chain is Protein smoothened (1036 aa).

The signal sequence occupies residues Met-1–Ala-31. The Extracellular portion of the chain corresponds to Ser-32–Leu-258. 2 N-linked (GlcNAc...) asparagine glycosylation sites follow: Asn-55 and Asn-95. The FZ domain occupies Val-85–Gly-206. 4 disulfides stabilise this stretch: Cys-90-Cys-155, Cys-100-Cys-148, Cys-139-Cys-179, and Cys-172-Cys-194. N-linked (GlcNAc...) asparagine glycosylation is found at Asn-184, Asn-195, and Asn-213. Intrachain disulfides connect Cys-218/Cys-238 and Cys-242/Cys-320. A helical transmembrane segment spans residues Ile-259–Ile-279. Residues Asp-280–Tyr-287 are Cytoplasmic-facing. Residues Pro-288–Leu-308 traverse the membrane as a helical segment. Over Gln-309 to Cys-339 the chain is Extracellular. N-linked (GlcNAc...) asparagine glycosylation occurs at Asn-336. Cys-339 and Cys-413 are joined by a disulfide. Residues Ile-340 to Leu-360 form a helical membrane-spanning segment. Residues Thr-361 to Ser-381 are Cytoplasmic-facing. A helical transmembrane segment spans residues Tyr-382 to Ser-402. At Glu-403 to Ser-421 the chain is on the extracellular side. An N-linked (GlcNAc...) asparagine glycan is attached at Asn-419. A helical transmembrane segment spans residues Met-422–Ile-442. Residues Thr-443 to His-469 are Cytoplasmic-facing. The chain crosses the membrane as a helical span at residues Leu-470–Ile-490. Topologically, residues Ala-491–Ser-532 are extracellular. Cys-513 and Cys-525 form a disulfide bridge. A helical transmembrane segment spans residues Val-533–Trp-553. Over Cys-554–Lys-1036 the chain is Cytoplasmic. Phosphoserine is present on residues Ser-658, Ser-659, Ser-667, Ser-670, Ser-673, Ser-687, Ser-690, and Ser-693. 2 disordered regions span residues His-678–Glu-745 and Ile-870–Ala-902. Basic residues predominate over residues Arg-880–Lys-899.

The protein belongs to the G-protein coupled receptor Fz/Smo family. As to quaternary structure, interacts with cos. Phosphorylation by CkIalpha and PKA regulates smo accumulation at the cell surface and its signaling activity in response to hh. In terms of tissue distribution, expressed in olfactory sensory neurons (at protein level).

Its subcellular location is the cell membrane. The protein localises to the cell projection. The protein resides in the cilium. Functionally, segment polarity protein required for correct patterning of every segment. G protein-coupled receptor which associates with the patched protein (ptc) to transduce the hedgehog (hh) signal through the activation of an inhibitory G-protein. In the absence of hh, ptc represses the constitutive signaling activity of smo through fused (fu). Essential component of a hh-signaling pathway which regulates the Duox-dependent gut immune response to bacterial uracil; required to activate Cad99C-dependent endosome formation, norpA-dependent Ca2+ mobilization and p38 MAPK, which are essential steps in the Duox-dependent production of reactive oxygen species (ROS) in response to intestinal bacterial infection. In Drosophila melanogaster (Fruit fly), this protein is Protein smoothened (smo).